A 455-amino-acid chain; its full sequence is Ammonium transporter Rh type B (455 aa).

The Cytoplasmic portion of the chain corresponds to 1–13; it reads MAWSPRHSAGRRL. The helical transmembrane segment at 14-34 threads the bilayer; it reads QLPLLCLLLQGATAILFAVFV. Topologically, residues 35-61 are extracellular; the sequence is RYNRETDAALWHWGNHSNADNEFYFRY. An N-linked (GlcNAc...) asparagine glycan is attached at Asn-49. The chain crosses the membrane as a helical span at residues 62–82; the sequence is PSFQDVHAMIFVGFGFLMVFL. Topologically, residues 83–86 are cytoplasmic; that stretch reads QRYG. The helical transmembrane segment at 87–107 threads the bilayer; sequence FGSVGFTFLLAAFALQWSTLI. Residues 108–124 lie on the Extracellular side of the membrane; sequence QGFFHSFRGGYILVGME. Residues 125-145 traverse the membrane as a helical segment; the sequence is SMINADFCAGAVLISFGAVLG. Over 146–151 the chain is Cytoplasmic; sequence KTGPVQ. The chain crosses the membrane as a helical span at residues 152–172; the sequence is LLLMALLEVVLFGLNEFVLLS. Residues 173–179 lie on the Extracellular side of the membrane; that stretch reads LLEVKDA. A helical membrane pass occupies residues 180-200; that stretch reads GGSMTIHTFGAYFGLILSRVL. The Cytoplasmic segment spans residues 201-219; sequence YRPQLEKSKHRQGSVYHSD. A helical transmembrane segment spans residues 220–240; the sequence is LFAMIGTIFLWIFWPSFNSAP. The Extracellular portion of the chain corresponds to 241-253; it reads TALGDGQHRTALN. Residues 254–274 traverse the membrane as a helical segment; that stretch reads TYYSLTASTLSTFALSALVGG. The Cytoplasmic segment spans residues 275–277; the sequence is DGR. Residues 278–298 form a helical membrane-spanning segment; sequence LDMVHVQNAALAGGVVVGTSA. Position 299 (Glu-299) is a topological domain, extracellular. The chain crosses the membrane as a helical span at residues 300 to 320; the sequence is MMLTPFGALAAGFLAGAISTL. Topologically, residues 321-343 are cytoplasmic; that stretch reads GYKFVTPILESKLKVQDTCGVHN. The chain crosses the membrane as a helical span at residues 344-364; that stretch reads LHGMPGVLGALLGGLVAGLAT. The Extracellular segment spans residues 365–393; that stretch reads REAYGDGLESVFPLIAEGQRSATSQAMHQ. The chain crosses the membrane as a helical span at residues 394–414; the sequence is LFGLFVTLTFASVGGGLGGLL. Residues 415–455 lie on the Cytoplasmic side of the membrane; that stretch reads LRLPILDSPPDSQCYEDQIYWEVPGEHEHLAQGSEETETQA. Positions 416-424 are interaction with ANK3; the sequence is RLPILDSPP. A Basolateral sorting signal motif is present at residues 429–432; the sequence is YEDQ.

Belongs to the ammonium transporter (TC 2.A.49) family. Rh subfamily. Interacts (via C-terminus) with ANK2 and ANK3; required for targeting to the basolateral membrane. In terms of processing, N-glycosylated.

The protein localises to the cell membrane. It localises to the basolateral cell membrane. It catalyses the reaction NH4(+)(in) = NH4(+)(out). The catalysed reaction is methylamine(out) = methylamine(in). It carries out the reaction CO2(out) = CO2(in). Functionally, ammonium transporter involved in the maintenance of acid-base homeostasis. Transports ammonium and its related derivative methylammonium across the basolateral plasma membrane of epithelial cells likely contributing to renal transepithelial ammonia transport and ammonia metabolism. May transport either NH4(+) or NH3 ammonia species predominantly mediating an electrogenic NH4(+) transport. May act as a CO2 channel providing for renal acid secretion. The protein is Ammonium transporter Rh type B (RHBG) of Bos taurus (Bovine).